The sequence spans 1392 residues: MNYSFTEKKRIRKSFAKRENVLEVPFLLATQIDSYAKFLQLENAFDKRTDDGLQAAFNSIFPIVSHNGYARLEFVHYTLGEPLFDIPECQLRGITYAAPLRARIRLVILDKEASKPTVKEVRENEVYMGEIPLMTPSGSFVINGTERVIVSQLHRSPGVFFEHDKGKTHSSGKLLFSARIIPYRGSWLDFEFDPKDLLYFRIDRRRKMPVTILLKALGYNNEQILDIFYDKETFYLSSNGVQTDLVADRLKGETAKVDILDKEGNVLVAKGKRITAKNIRDITNAGLTRLDVEPESLLGKALAADLIDSETGEVLASANDEITEELLAKFDINGVKEITTLYINELDQGAYISNTLRTDETAGRQAARVAIYRMMRPGEPPTEEAVEQLFNRLFFSEDSYDLSRVGRMKFNTRTYEQKLSEAQQNSWYGRLLNETFAGAADKGGYVLSVEDIVASIATLVELRNGHGEVDDIDHLGNRRVRSVGELTENQFRSGLARVERAVKERLNQAESENLMPHDLINAKPVSAAIKEFFGSSQLSQFMDQTNPLSEVTHKRRVSALGPGGLTRERAGFEVRDVHPTHYGRVCPIETPEGPNIGLINSLSVYARTNDYGFLETPYRRVIDGKVTEEIDYLSAIEEGRYVIAQANADLDSDGNLIGDLVTCREKGETIMATPDRVQYMDVATGQVVSVAASLIPFLEHDDANRALMGANMQRQAVPCLRPEKPMVGTGIERSVAVDSATAIVARRGGVVEYVDANRVVIRVHDDEATAGEVGVDIYNLVKFTRSNQSTNINQRPAVKAGDVLQRGDLVADGASTDFGELALGQNMTIAFMPWNGYNYEDSILISEKVAADDRYTSIHIEELNVVARDTKLGAEDITRDIPNLSERMQNRLDESGIVYIGAEVEAGDVLVGKVTPKGETQLTPEEKLLRAIFGEKASDVKDTSLRMPTGMSGTVIDVQVFTREGIQRDKRAQSIIDSELKRYRLDLNDQLRIFDNDAFDRIERMIVGQKANGGPMKLAKGSEITTEYLAGLPSRHDWFDIRLTDEDLAKQLELIKVSLQQKREEADELYEIKKKKLTQGDELQPGVQKMVKVFIAIKRRLQAGDKMAGRHGNKGVVSRILPVEDMPYMADGRPVDIVLNPLGVPSRMNIGQILEVHLGWAAKGIGERIDRMLKEQRKAGELREFLNRLYNGSGKKEDLDALTDEEIIELASNLRKGASFASPVFDGAKESEIREMLNLAYPSDDPEVEKLGFNDSKTQITLYDGRSGEAFDRKVTVGVMHYLKLHHLVDEKMHARSTGPYSLVTQQPLGGKAQFGGQRFGEMEVWALEAYGAAYTLQEMLTVKSDDVNGRTKMYENIVKGEHKIDAGMPESFNVLVKEIRSLGLDIDLERY.

This sequence belongs to the RNA polymerase beta chain family. The RNAP catalytic core consists of 2 alpha, 1 beta, 1 beta' and 1 omega subunit. When a sigma factor is associated with the core the holoenzyme is formed, which can initiate transcription.

It carries out the reaction RNA(n) + a ribonucleoside 5'-triphosphate = RNA(n+1) + diphosphate. In terms of biological role, DNA-dependent RNA polymerase catalyzes the transcription of DNA into RNA using the four ribonucleoside triphosphates as substrates. The chain is DNA-directed RNA polymerase subunit beta from Neisseria meningitidis serogroup B (strain ATCC BAA-335 / MC58).